A 419-amino-acid chain; its full sequence is uncharacterized protein (419 aa).

A run of 12 helical transmembrane segments spans residues 15–35 (RVLM…MPYL), 36–56 (ADYL…VMGV), 77–99 (YKPL…VVAQ), 104–126 (VLIA…RGYL), 140–160 (MFNV…LVLL), 166–186 (ITVL…LVAL), 213–233 (FLTL…IYLA), 246–266 (QYLL…GGQL), 282–302 (LVVG…IPNG), 309–329 (VAVM…AALF), 351–371 (FYST…GSLM), and 377–397 (LNTD…AVAG).

The protein belongs to the major facilitator superfamily.

Its subcellular location is the cell membrane. This is an uncharacterized protein from Mycobacterium tuberculosis (strain CDC 1551 / Oshkosh).